The sequence spans 366 residues: DNA-directed RNA polymerase subunit alpha (366 aa).

The interval 1 to 233 (MVREKVRVST…DLFLPFLHAE (233 aa)) is alpha N-terminal domain (alpha-NTD). The interval 264–366 (KNEIALKSIF…KDEMGFESLE (103 aa)) is alpha C-terminal domain (alpha-CTD).

Belongs to the RNA polymerase alpha chain family. As to quaternary structure, in plastids the minimal PEP RNA polymerase catalytic core is composed of four subunits: alpha, beta, beta', and beta''. When a (nuclear-encoded) sigma factor is associated with the core the holoenzyme is formed, which can initiate transcription.

The protein resides in the plastid. Its subcellular location is the chloroplast. It catalyses the reaction RNA(n) + a ribonucleoside 5'-triphosphate = RNA(n+1) + diphosphate. Functionally, DNA-dependent RNA polymerase catalyzes the transcription of DNA into RNA using the four ribonucleoside triphosphates as substrates. The protein is DNA-directed RNA polymerase subunit alpha of Oenothera elata subsp. hookeri (Hooker's evening primrose).